Reading from the N-terminus, the 134-residue chain is ATP synthase epsilon chain (134 aa).

It belongs to the ATPase epsilon chain family. F-type ATPases have 2 components, CF(1) - the catalytic core - and CF(0) - the membrane proton channel. CF(1) has five subunits: alpha(3), beta(3), gamma(1), delta(1), epsilon(1). CF(0) has three main subunits: a, b and c.

It localises to the cell membrane. Functionally, produces ATP from ADP in the presence of a proton gradient across the membrane. This Listeria welshimeri serovar 6b (strain ATCC 35897 / DSM 20650 / CCUG 15529 / CIP 8149 / NCTC 11857 / SLCC 5334 / V8) protein is ATP synthase epsilon chain.